The primary structure comprises 609 residues: Dihydroxy-acid dehydratase 1 (609 aa).

Asp-81 is a Mg(2+) binding site. [2Fe-2S] cluster is bound at residue Cys-122. Residues Asp-123 and Lys-124 each contribute to the Mg(2+) site. Position 124 is an N6-carboxylysine (Lys-124). Cys-195 provides a ligand contact to [2Fe-2S] cluster. Mg(2+) is bound at residue Glu-491. Ser-517 acts as the Proton acceptor in catalysis.

The protein belongs to the IlvD/Edd family. In terms of assembly, homodimer. It depends on [2Fe-2S] cluster as a cofactor. The cofactor is Mg(2+).

It carries out the reaction (2R)-2,3-dihydroxy-3-methylbutanoate = 3-methyl-2-oxobutanoate + H2O. It catalyses the reaction (2R,3R)-2,3-dihydroxy-3-methylpentanoate = (S)-3-methyl-2-oxopentanoate + H2O. Its pathway is amino-acid biosynthesis; L-isoleucine biosynthesis; L-isoleucine from 2-oxobutanoate: step 3/4. The protein operates within amino-acid biosynthesis; L-valine biosynthesis; L-valine from pyruvate: step 3/4. Functionally, functions in the biosynthesis of branched-chain amino acids. Catalyzes the dehydration of (2R,3R)-2,3-dihydroxy-3-methylpentanoate (2,3-dihydroxy-3-methylvalerate) into 2-oxo-3-methylpentanoate (2-oxo-3-methylvalerate) and of (2R)-2,3-dihydroxy-3-methylbutanoate (2,3-dihydroxyisovalerate) into 2-oxo-3-methylbutanoate (2-oxoisovalerate), the penultimate precursor to L-isoleucine and L-valine, respectively. The sequence is that of Dihydroxy-acid dehydratase 1 from Acinetobacter baylyi (strain ATCC 33305 / BD413 / ADP1).